We begin with the raw amino-acid sequence, 213 residues long: Orotate phosphoribosyltransferase (213 aa).

Lysine 26 is a 5-phospho-alpha-D-ribose 1-diphosphate binding site. Phenylalanine 34–phenylalanine 35 serves as a coordination point for orotate. Residues tyrosine 72 to lysine 73, arginine 99, lysine 100, lysine 103, histidine 105, and aspartate 124 to alanine 132 each bind 5-phospho-alpha-D-ribose 1-diphosphate. Orotate is bound by residues threonine 128 and arginine 156.

It belongs to the purine/pyrimidine phosphoribosyltransferase family. PyrE subfamily. As to quaternary structure, homodimer. The cofactor is Mg(2+).

It catalyses the reaction orotidine 5'-phosphate + diphosphate = orotate + 5-phospho-alpha-D-ribose 1-diphosphate. It functions in the pathway pyrimidine metabolism; UMP biosynthesis via de novo pathway; UMP from orotate: step 1/2. Its function is as follows. Catalyzes the transfer of a ribosyl phosphate group from 5-phosphoribose 1-diphosphate to orotate, leading to the formation of orotidine monophosphate (OMP). The chain is Orotate phosphoribosyltransferase from Serratia proteamaculans (strain 568).